The chain runs to 658 residues: Endoplasmic reticulum chaperone BiP (658 aa).

The signal sequence occupies residues 1–19 (MVTMKLFALVLLVSASVFA). ATP is bound by residues 38–41 (GTTY), K98, 228–230 (GGT), 294–301 (EKAKRALS), and 365–368 (GSTR). Positions 127 to 281 (KPYIEVDIGD…KKKTGKDVRA (155 aa)) are nucleotide-binding (NBD). Residues 410–420 (QDTGDLVLLDV) form an interdomain linker region. Residues 421 to 501 (CPLTLGIETV…PRGVPQIEVT (81 aa)) form a substrate-binding (SBD) region. The interval 634-658 (KLYGGAGAPPPEGAEGAEETEKDEL) is disordered. The span at 648-658 (EGAEETEKDEL) shows a compositional bias: acidic residues. A Prevents secretion from ER motif is present at residues 655 to 658 (KDEL).

Belongs to the heat shock protein 70 family. As to quaternary structure, monomer and homooligomer; homooligomerization via the interdomain linker inactivates the chaperone activity and acts as a storage of hspa5/BiP molecules. Interacts with DNAJC10. Interacts with dnajb9/ERdj4; leading to recruit hspa5/BiP to ern1/ire1. Interacts with ern1/ire1; interaction takes place following interaction with dnajb9/ERdj4 and leads to inactivate ern1/IRE1.

The protein localises to the endoplasmic reticulum lumen. It carries out the reaction ATP + H2O = ADP + phosphate + H(+). Its activity is regulated as follows. The chaperone activity is regulated by ATP-induced allosteric coupling of the nucleotide-binding (NBD) and substrate-binding (SBD) domains. In the ADP-bound and nucleotide-free (apo) states, the two domains have little interaction. In contrast, in the ATP-bound state the two domains are tightly coupled, which results in drastically accelerated kinetics in both binding and release of polypeptide substrates. J domain-containing co-chaperones (dnajb9/ERdj4 or dnajc10/ERdj5) stimulate the ATPase activity and are required for efficient substrate recognition by hspa5/BiP. Homooligomerization inactivates participating hspa5/BiP protomers and probably act as reservoirs to store hspa5/BiP molecules when they are not needed by the cell. Its function is as follows. Endoplasmic reticulum chaperone that plays a key role in protein folding and quality control in the endoplasmic reticulum lumen. Involved in the correct folding of proteins and degradation of misfolded proteins via its interaction with dnajc10/ERdj5, probably to facilitate the release of dnajc10/ERdj5 from its substrate. Acts as a key repressor of the EIF2AK3/PERK and ERN1/IRE1-mediated unfolded protein response (UPR). In the unstressed endoplasmic reticulum, recruited by DNAJB9/ERdj4 to the luminal region of ERN1/IRE1, leading to disrupt the dimerization of ERN1/IRE1, thereby inactivating ERN1/IRE1. Also binds and inactivates EIF2AK3/PERK in unstressed cells. Accumulation of misfolded protein in the endoplasmic reticulum causes release of HSPA5/BiP from ERN1/IRE1 and EIF2AK3/PERK, allowing their homodimerization and subsequent activation. The chain is Endoplasmic reticulum chaperone BiP from Xenopus laevis (African clawed frog).